Consider the following 30-residue polypeptide: Thylakoid lumenal 17 kDa protein (30 aa).

It is found in the plastid. Its subcellular location is the chloroplast thylakoid lumen. This is Thylakoid lumenal 17 kDa protein from Spinacia oleracea (Spinach).